Here is a 222-residue protein sequence, read N- to C-terminus: 7-cyano-7-deazaguanine synthase (222 aa).

Residue 8-18 coordinates ATP; that stretch reads LSGGMDSTTAA. The Zn(2+) site is built by cysteine 187, cysteine 195, cysteine 198, and cysteine 201.

The protein belongs to the QueC family. It depends on Zn(2+) as a cofactor.

It carries out the reaction 7-carboxy-7-deazaguanine + NH4(+) + ATP = 7-cyano-7-deazaguanine + ADP + phosphate + H2O + H(+). It participates in purine metabolism; 7-cyano-7-deazaguanine biosynthesis. Catalyzes the ATP-dependent conversion of 7-carboxy-7-deazaguanine (CDG) to 7-cyano-7-deazaguanine (preQ(0)). In Nautilia profundicola (strain ATCC BAA-1463 / DSM 18972 / AmH), this protein is 7-cyano-7-deazaguanine synthase.